Consider the following 494-residue polypeptide: UDP-N-acetylmuramoyl-L-alanyl-D-glutamate--2,6-diaminopimelate ligase (494 aa).

Ser-30 is a binding site for UDP-N-acetyl-alpha-D-muramoyl-L-alanyl-D-glutamate. 110 to 116 (GTNGKTS) is an ATP binding site. UDP-N-acetyl-alpha-D-muramoyl-L-alanyl-D-glutamate-binding positions include 152–153 (TT), Ser-179, and Arg-187. Position 219 is an N6-carboxylysine (Lys-219). Meso-2,6-diaminopimelate-binding positions include Arg-380, 404–407 (DNPR), Gly-456, and Glu-460. The Meso-diaminopimelate recognition motif signature appears at 404 to 407 (DNPR).

It belongs to the MurCDEF family. MurE subfamily. Mg(2+) serves as cofactor. Carboxylation is probably crucial for Mg(2+) binding and, consequently, for the gamma-phosphate positioning of ATP.

Its subcellular location is the cytoplasm. The catalysed reaction is UDP-N-acetyl-alpha-D-muramoyl-L-alanyl-D-glutamate + meso-2,6-diaminopimelate + ATP = UDP-N-acetyl-alpha-D-muramoyl-L-alanyl-gamma-D-glutamyl-meso-2,6-diaminopimelate + ADP + phosphate + H(+). Its pathway is cell wall biogenesis; peptidoglycan biosynthesis. Catalyzes the addition of meso-diaminopimelic acid to the nucleotide precursor UDP-N-acetylmuramoyl-L-alanyl-D-glutamate (UMAG) in the biosynthesis of bacterial cell-wall peptidoglycan. The polypeptide is UDP-N-acetylmuramoyl-L-alanyl-D-glutamate--2,6-diaminopimelate ligase (Alkaliphilus metalliredigens (strain QYMF)).